A 273-amino-acid polypeptide reads, in one-letter code: 4-hydroxy-tetrahydrodipicolinate reductase (273 aa).

NAD(+) is bound by residues 12–17 and Glu38; that span reads GAGGRM. Arg39 lines the NADP(+) pocket. NAD(+) is bound by residues 102-104 and 126-129; these read GTT and AANF. Residue His159 is the Proton donor/acceptor of the active site. Residue His160 coordinates (S)-2,3,4,5-tetrahydrodipicolinate. Lys163 acts as the Proton donor in catalysis. 169–170 lines the (S)-2,3,4,5-tetrahydrodipicolinate pocket; sequence GT.

It belongs to the DapB family. As to quaternary structure, homotetramer.

It is found in the cytoplasm. The catalysed reaction is (S)-2,3,4,5-tetrahydrodipicolinate + NAD(+) + H2O = (2S,4S)-4-hydroxy-2,3,4,5-tetrahydrodipicolinate + NADH + H(+). The enzyme catalyses (S)-2,3,4,5-tetrahydrodipicolinate + NADP(+) + H2O = (2S,4S)-4-hydroxy-2,3,4,5-tetrahydrodipicolinate + NADPH + H(+). Its pathway is amino-acid biosynthesis; L-lysine biosynthesis via DAP pathway; (S)-tetrahydrodipicolinate from L-aspartate: step 4/4. Catalyzes the conversion of 4-hydroxy-tetrahydrodipicolinate (HTPA) to tetrahydrodipicolinate. The sequence is that of 4-hydroxy-tetrahydrodipicolinate reductase from Proteus mirabilis (strain HI4320).